The chain runs to 558 residues: Oxygen-dependent choline dehydrogenase (558 aa).

Asp-8–Glu-37 is an FAD binding site. Residue His-475 is the Proton acceptor of the active site.

Belongs to the GMC oxidoreductase family. FAD is required as a cofactor.

It carries out the reaction choline + A = betaine aldehyde + AH2. The enzyme catalyses betaine aldehyde + NAD(+) + H2O = glycine betaine + NADH + 2 H(+). Its pathway is amine and polyamine biosynthesis; betaine biosynthesis via choline pathway; betaine aldehyde from choline (cytochrome c reductase route): step 1/1. Functionally, involved in the biosynthesis of the osmoprotectant glycine betaine. Catalyzes the oxidation of choline to betaine aldehyde and betaine aldehyde to glycine betaine at the same rate. The chain is Oxygen-dependent choline dehydrogenase from Chromohalobacter salexigens (strain ATCC BAA-138 / DSM 3043 / CIP 106854 / NCIMB 13768 / 1H11).